We begin with the raw amino-acid sequence, 225 residues long: Protein ERP3 (225 aa).

Positions 1–23 are cleaved as a signal peptide; it reads MSNLCVLFFQFFFLAQFFAEASP. Residues 24 to 195 are Lumenal-facing; sequence LTFELNKGRK…STEHRIVMFS (172 aa). The region spanning 33 to 172 is the GOLD domain; that stretch reads KECLYTLTPE…LHVLERNIQY (140 aa). Residues 129–138 are compositionally biased toward basic residues; it reads ERRKARKAQR. Residues 129-149 are disordered; that stretch reads ERRKARKAQRNLRDSKTDPLQ. The helical transmembrane segment at 196-216 threads the bilayer; that stretch reads IYGILLIIGMSCAQIAILEFI. Residues 217–225 are Cytoplasmic-facing; it reads FRESRKHNV.

This sequence belongs to the EMP24/GP25L family.

The protein localises to the endoplasmic reticulum membrane. Functionally, involved in vesicular protein trafficking. The sequence is that of Protein ERP3 (ERP3) from Saccharomyces cerevisiae (strain ATCC 204508 / S288c) (Baker's yeast).